We begin with the raw amino-acid sequence, 477 residues long: uncharacterized protein (477 aa).

The helical transmembrane segment at 107–129 threads the bilayer; it reads VNFWSLSMACASVLALLGLVYLI.

It localises to the membrane. This is an uncharacterized protein from Treponema pallidum (strain Nichols).